Consider the following 672-residue polypeptide: DNA polymerase eta (672 aa).

The region spanning 14 to 254 is the UmuC domain; sequence IAHVDMDCFY…LPIKKMKQLG (241 aa). Positions 18 and 19 each coordinate Mg(2+). Mn(2+)-binding residues include Asp-18 and Met-19. The a 2'-deoxyribonucleoside 5'-triphosphate site is built by Tyr-23 and Arg-60. The Mg(2+) site is built by Asp-120 and Glu-121. Mn(2+) contacts are provided by Asp-120 and Glu-121. Residue Glu-121 is the Proton acceptor of the active site. DNA-binding stretches follow at residues 318-325 and 362-383; these read KTFPGPRA and TLHA…PSKS. Disordered stretches follow at residues 521-617 and 648-672; these read VSCP…TDWG and QFNT…PLNR. Composition is skewed to polar residues over residues 523–544 and 570–586; these read CPSN…TQTK and YNAT…DSTV. Composition is skewed to low complexity over residues 587–602 and 651–662; these read SSAS…SHNS and TGKSKGDGSTSS.

This sequence belongs to the DNA polymerase type-Y family. Interacts with PCNA1 and PCNA2. The interaction with PCNA2 is required for translesion synthesis (TLS) to repair UV photoproducts. It depends on Mg(2+) as a cofactor. Requires Mn(2+) as cofactor. As to expression, constitutively expressed in roots, stems, leaves, flowers and siliques.

Its subcellular location is the nucleus. It carries out the reaction DNA(n) + a 2'-deoxyribonucleoside 5'-triphosphate = DNA(n+1) + diphosphate. The enzyme in complex with the DNA substrate binds a third divalent metal cation. The binding of this third divalent cation, which is coordinated by water molecules and two oxygen atoms from DNA and dNTP, is essential for catalyzing the DNA synthesis. Error-free DNA polymerase specifically involved in DNA repair. Plays an important role in translesion synthesis (TLS), where the normal high fidelity DNA polymerases cannot proceed and DNA synthesis stalls. Plays an important role in the repair of UV-induced pyrimidine dimers and confers resistance to ultraviolet light. Depending on the context, it inserts the correct base, but may cause base transitions and transversions. Forms a Schiff base with 5'-deoxyribose phosphate at abasic sites, but does not have lyase activity. Targets POLI to replication foci. Exhibits cyclobutane dimer nonmutagenic bypass activity in vitro. The protein is DNA polymerase eta (POLH) of Arabidopsis thaliana (Mouse-ear cress).